Here is a 170-residue protein sequence, read N- to C-terminus: MVSSLKDMLKYDEGEKLEMYKDTEGNYTIGIGHLITKNKDKNEAIKILEGEIGHTVKLNSKKEPEISSSESESLFEKDKSVAINSIENSSTLSTIYNNLDSNRKMALANMVFQMGASNVSKFKKSLKLIEEKKWAEAAIELKNSTWNTQTPKRSNRVISVFETGTLKEYK.

The active-site Proton donor is Glu-13. Asp-22 (nucleophile) is an active-site residue.

Belongs to the glycosyl hydrolase 24 family.

It carries out the reaction Hydrolysis of (1-&gt;4)-beta-linkages between N-acetylmuramic acid and N-acetyl-D-glucosamine residues in a peptidoglycan and between N-acetyl-D-glucosamine residues in chitodextrins.. The protein is Probable T4-type lysozyme 2 of Dictyostelium discoideum (Social amoeba).